The chain runs to 155 residues: MSEQNNTEMTFQIQRIYTKDISFEAPNAPHVFQKDWQPEVKLDLDTASSQLADDVYEVVLRVTVTASLGEETAFLCEVQQGGIFSIAGIEGTQMAHCLGAYCPNILFPYARECITSMVSRGTFPQLNLAPVNFDALFMNYLQQQAGEGTEEHQDA.

The protein belongs to the SecB family. Homotetramer, a dimer of dimers. One homotetramer interacts with 1 SecA dimer.

The protein resides in the cytoplasm. One of the proteins required for the normal export of preproteins out of the cell cytoplasm. It is a molecular chaperone that binds to a subset of precursor proteins, maintaining them in a translocation-competent state. It also specifically binds to its receptor SecA. The protein is Protein-export protein SecB of Escherichia coli O139:H28 (strain E24377A / ETEC).